Consider the following 776-residue polypeptide: MDSANARDCLLHLARAKLSERQDLVQLNDQFVDIIEHVHYMEAEHTALEHDYNLLKSGVQSDSSGINEIYNVEIRTVRSGIEEINRSRHELLNEQTQLSHQVKEAEQLWRHTAKSALGVPKEVDDEFHRICHIKMEDCITKRRIKYMEDKLRLIKQNNGRIFEHINLMRMRKDQAVSLQQEYLLRKNELLHSIRNMEEDNKKIIMNEHKYFVRDRNADRHVFRDQLRKAIADIRADYEANRLRNEEEIRIRLEREIHRMNTTMPGVVCYDKLREELSIVKNNLSGLQKQVSEVEIRNNSLTQQIEFYRLEISENNKLFEDTLEFKIKEIEKMREQCTAISVELEKLCDLNIDLQKEIAKYRELLDRSGDPRANAPSTQVIASALSRQNYSSISDHHSRTSSGIVQHTAHHAVRDSSSSRTGTTIHETITHTPIPIPATLPVQPIREYTYSRDASPIRPSYTPYQQESRADSRSSLRERIQIETLQGTLPVLPSHSVETIRASDNTRLVRDLSAGGQINTTQINNPYASRTPTSSVNDRIASERRDSEIRRNDALHQPYPIGGAVPRVEPTIFNERAPGYTHINSNFPLITPVTEGATVPSYYDTFNRNSSQRGPHHSSYHAATGSVSNSISTTLLNEGSIEHSSSSDSVDEDNFQRFTRWYKGRVKISDVTADFVQLVNRSSKKSADVGGFKLIHEFGNKSVYVDLPVGLILAPKDSLKIYARGATHERGAVIAEIDFFDTTIHTNTSIRNTNNEVKSWFVYTSNTEIGDADHHHH.

The head stretch occupies residues 1–23 (MDSANARDCLLHLARAKLSERQD). The region spanning 20–371 (ERQDLVQLND…ELLDRSGDPR (352 aa)) is the IF rod domain. Residues 24-55 (LVQLNDQFVDIIEHVHYMEAEHTALEHDYNLL) are coil 1A. Positions 56-69 (KSGVQSDSSGINEI) are linker 1. The coil 1B stretch occupies residues 70 to 207 (YNVEIRTVRS…EDNKKIIMNE (138 aa)). The tract at residues 208–224 (HKYFVRDRNADRHVFRD) is linker 12. The tract at residues 225 to 620 (QLRKAIADIR…QRGPHHSSYH (396 aa)) is coil 2. Disordered stretches follow at residues 453-473 (ASPI…DSRS) and 518-544 (NTTQ…SERR). Positions 518–536 (NTTQINNPYASRTPTSSVN) are enriched in polar residues. The segment at 621-768 (AATGSVSNSI…WFVYTSNTEI (148 aa)) is tail. Residues 653 to 764 (NFQRFTRWYK…EVKSWFVYTS (112 aa)) form the LTD domain.

Belongs to the intermediate filament family.

The protein localises to the cytoplasm. Functionally, cytoplasmic intermediate filaments provide mechanical strength to cells. Not essential protein. In Caenorhabditis elegans, this protein is Intermediate filament protein ifp-1 (ifp-1).